The primary structure comprises 100 residues: uncharacterized protein (100 aa).

2 helical membrane passes run 1–21 and 54–74; these read MLVL…YKVK and MILF…VIGA.

It localises to the cell membrane. This is an uncharacterized protein from Bacillus subtilis (strain 168).